Here is a 306-residue protein sequence, read N- to C-terminus: Probable arylamine N-acetyltransferase 3 (306 aa).

The Acyl-thioester intermediate role is filled by Cys75. Residues His115 and Asp130 contribute to the active site.

This sequence belongs to the arylamine N-acetyltransferase family.

The enzyme catalyses an arylamine + acetyl-CoA = an N-acetylarylamine + CoA. This chain is Probable arylamine N-acetyltransferase 3, found in Dictyostelium discoideum (Social amoeba).